The chain runs to 223 residues: Putative archaetidylserine decarboxylase proenzyme (223 aa).

Ser-183 (schiff-base intermediate with substrate; via pyruvic acid) is an active-site residue. Ser-183 is modified (pyruvic acid (Ser); by autocatalysis).

The protein belongs to the phosphatidylserine decarboxylase family. PSD-A subfamily. As to quaternary structure, heterodimer of a large membrane-associated beta subunit and a small pyruvoyl-containing alpha subunit. The cofactor is pyruvate. Post-translationally, is synthesized initially as an inactive proenzyme. Formation of the active enzyme involves a self-maturation process in which the active site pyruvoyl group is generated from an internal serine residue via an autocatalytic post-translational modification. Two non-identical subunits are generated from the proenzyme in this reaction, and the pyruvate is formed at the N-terminus of the alpha chain, which is derived from the carboxyl end of the proenzyme. The post-translation cleavage follows an unusual pathway, termed non-hydrolytic serinolysis, in which the side chain hydroxyl group of the serine supplies its oxygen atom to form the C-terminus of the beta chain, while the remainder of the serine residue undergoes an oxidative deamination to produce ammonia and the pyruvoyl prosthetic group on the alpha chain.

Its subcellular location is the cell membrane. It catalyses the reaction archaetidylserine + H(+) = archaetidylethanolamine + CO2. Functionally, catalyzes the formation of archaetidylethanolamine (PtdEtn) from archaetidylserine (PtdSer). This Methanothermobacter thermautotrophicus (strain ATCC 29096 / DSM 1053 / JCM 10044 / NBRC 100330 / Delta H) (Methanobacterium thermoautotrophicum) protein is Putative archaetidylserine decarboxylase proenzyme.